A 59-amino-acid chain; its full sequence is Zinc finger protein HVO_2753 (59 aa).

Short sequence motifs (c(P)XCG motif) lie at residues 12–16, 29–33, 39–43, and 51–55; these read CVSCG, CPDCG, and CSKCR. 2 residues coordinate Zn(2+): cysteine 29 and cysteine 32. Positions 51 and 54 each coordinate Zn(2+).

As to quaternary structure, monomer in solution.

Zinc-binding protein that binds only one zinc ion. Is required for swarming and biofilm formation. This is Zinc finger protein HVO_2753 from Haloferax volcanii (strain ATCC 29605 / DSM 3757 / JCM 8879 / NBRC 14742 / NCIMB 2012 / VKM B-1768 / DS2) (Halobacterium volcanii).